The primary structure comprises 254 residues: 4-hydroxy-tetrahydrodipicolinate reductase (254 aa).

NAD(+) contacts are provided by residues 10–15 (GATGKV) and 101–103 (GTT). Histidine 157 acts as the Proton donor/acceptor in catalysis. Histidine 158 is a binding site for (S)-2,3,4,5-tetrahydrodipicolinate. The Proton donor role is filled by lysine 161. 167-168 (GT) lines the (S)-2,3,4,5-tetrahydrodipicolinate pocket.

It belongs to the DapB family.

The protein localises to the cytoplasm. It catalyses the reaction (S)-2,3,4,5-tetrahydrodipicolinate + NAD(+) + H2O = (2S,4S)-4-hydroxy-2,3,4,5-tetrahydrodipicolinate + NADH + H(+). The catalysed reaction is (S)-2,3,4,5-tetrahydrodipicolinate + NADP(+) + H2O = (2S,4S)-4-hydroxy-2,3,4,5-tetrahydrodipicolinate + NADPH + H(+). It participates in amino-acid biosynthesis; L-lysine biosynthesis via DAP pathway; (S)-tetrahydrodipicolinate from L-aspartate: step 4/4. In terms of biological role, catalyzes the conversion of 4-hydroxy-tetrahydrodipicolinate (HTPA) to tetrahydrodipicolinate. The chain is 4-hydroxy-tetrahydrodipicolinate reductase from Symbiobacterium thermophilum (strain DSM 24528 / JCM 14929 / IAM 14863 / T).